The chain runs to 348 residues: Phenylalanine--tRNA ligase alpha subunit (348 aa).

Mg(2+) is bound at residue glutamate 259.

It belongs to the class-II aminoacyl-tRNA synthetase family. Phe-tRNA synthetase alpha subunit type 1 subfamily. In terms of assembly, tetramer of two alpha and two beta subunits. Mg(2+) is required as a cofactor.

It is found in the cytoplasm. It catalyses the reaction tRNA(Phe) + L-phenylalanine + ATP = L-phenylalanyl-tRNA(Phe) + AMP + diphosphate + H(+). The chain is Phenylalanine--tRNA ligase alpha subunit from Levilactobacillus brevis (strain ATCC 367 / BCRC 12310 / CIP 105137 / JCM 1170 / LMG 11437 / NCIMB 947 / NCTC 947) (Lactobacillus brevis).